A 306-amino-acid polypeptide reads, in one-letter code: Glutamyl-Q tRNA(Asp) synthetase (306 aa).

L-glutamate is bound by residues arginine 29–serine 33 and aspartate 65. A 'HIGH' region motif is present at residues proline 32–asparagine 42. Zn(2+) is bound by residues cysteine 121, cysteine 123, tyrosine 141, and cysteine 145. The L-glutamate site is built by tyrosine 188 and arginine 206. A 'KMSKS' region motif is present at residues lysine 244 to arginine 248. Lysine 247 lines the ATP pocket.

It belongs to the class-I aminoacyl-tRNA synthetase family. GluQ subfamily. It depends on Zn(2+) as a cofactor.

In terms of biological role, catalyzes the tRNA-independent activation of glutamate in presence of ATP and the subsequent transfer of glutamate onto a tRNA(Asp). Glutamate is transferred on the 2-amino-5-(4,5-dihydroxy-2-cyclopenten-1-yl) moiety of the queuosine in the wobble position of the QUC anticodon. The chain is Glutamyl-Q tRNA(Asp) synthetase from Prochlorococcus marinus (strain MIT 9303).